A 533-amino-acid chain; its full sequence is 2-isopropylmalate synthase (533 aa).

A Pyruvate carboxyltransferase domain is found at 8–269; sequence IIIFDTTLRD…YYNPFLGRPA (262 aa). The Mn(2+) site is built by aspartate 17, histidine 208, histidine 210, and asparagine 244. The regulatory domain stretch occupies residues 408-533; it reads RLELVQVSCG…VSANPAKASL (126 aa).

This sequence belongs to the alpha-IPM synthase/homocitrate synthase family. LeuA type 1 subfamily. Homodimer. It depends on Mn(2+) as a cofactor.

The protein localises to the cytoplasm. The enzyme catalyses 3-methyl-2-oxobutanoate + acetyl-CoA + H2O = (2S)-2-isopropylmalate + CoA + H(+). Its pathway is amino-acid biosynthesis; L-leucine biosynthesis; L-leucine from 3-methyl-2-oxobutanoate: step 1/4. Its function is as follows. Catalyzes the condensation of the acetyl group of acetyl-CoA with 3-methyl-2-oxobutanoate (2-ketoisovalerate) to form 3-carboxy-3-hydroxy-4-methylpentanoate (2-isopropylmalate). The sequence is that of 2-isopropylmalate synthase from Picosynechococcus sp. (strain ATCC 27264 / PCC 7002 / PR-6) (Agmenellum quadruplicatum).